The sequence spans 208 residues: Effector protein MavE (208 aa).

The NPxY eukaryotic motif signature appears at 77–80 (NPRY). A helical membrane pass occupies residues 184–204 (VLFPFVAATVAVAATAASVLF).

As to quaternary structure, homotrimer.

The protein resides in the secreted. The protein localises to the host vacuole. Its subcellular location is the host pathogen-containing vacuole. It is found in the host pathogen-containing vacuole membrane. In terms of biological role, virulence effector that is indispensable for endoplasmic reticulum (ER)-mediated remodeling of the Legionella pneumophila-containing vacuole (LCV) and lysosomal evasion. Essential for intracellular replication in human monocyte-derived macrophages (hMDMs) and amoebae, as well as for intrapulmonary proliferation in mice. The sequence is that of Effector protein MavE from Legionella pneumophila subsp. pneumophila (strain Philadelphia 1 / ATCC 33152 / DSM 7513).